A 1500-amino-acid polypeptide reads, in one-letter code: Rho GTPase-activating protein 35 (1500 aa).

The interval 1 to 266 is has GTPase activity, required for proper localization; the sequence is MMMARKQDVR…IPYFEALKQQ (266 aa). GTP-binding positions include lysine 28, 33–37, leucine 52, serine 56, 95–97, 201–203, and 229–231; these read IGKSC, EQT, KCD, and SAR. 4 consecutive FF domains span residues 270–327, 368–422, 429–483, and 485–550; these read IATA…HIHR, KLLE…HLEK, RAEM…HQKQ, and IDKA…HIHF. Tyrosine 308 bears the Phosphotyrosine mark. Serine 589 bears the Phosphoserine mark. Positions 592–767 constitute a pG1 pseudoGTPase domain; it reads DPNIDRINLV…LLDSKRNLNL (176 aa). Residues serine 770 and serine 773 each carry the phosphoserine modification. Residues 783–947 enclose the pG2 pseudoGTPase domain; the sequence is RIVMCLMCGD…FKDVVDKKNI (165 aa). 5 positions are modified to phosphoserine: serine 970, serine 975, serine 985, serine 1002, and serine 1073. The tract at residues 970-989 is disordered; sequence SPRAGSPLCNSNLQDSEEDI. Residues 1058 to 1090 are disordered; that stretch reads SYLDQGHRDGQRKSVSSSTWLPPDGFDPSDYAE. Tyrosine 1088 carries the post-translational modification Phosphotyrosine. A Phosphotyrosine; by ABL2 and PTK6 modification is found at tyrosine 1106. A compositionally biased stretch (polar residues) spans 1125–1142; the sequence is KAQSNGSGNGSDSEMDTS. Positions 1125 to 1147 are disordered; sequence KAQSNGSGNGSDSEMDTSSLERG. Phosphoserine occurs at positions 1135, 1143, 1151, 1177, 1180, and 1222. Residues 1178-1208 form a disordered region; that stretch reads VGSDDELGPIRKKEEDQASQGYKGDNAVIPY. Residues 1214 to 1237 are required for phospholipid binding and regulation of the substrate preference; that stretch reads PRRRNILRSLRRNTKKPKPKPRPS. Threonine 1227 carries the post-translational modification Phosphothreonine. Serine 1237 carries the post-translational modification Phosphoserine. The Rho-GAP domain maps to 1250–1437; sequence VPLTTVVTPE…LFIQQCPFFF (188 aa). The segment at 1444–1500 is disordered; that stretch reads EPPGATPSSPSAVASTVPFLTSTPVTSQPSPPQSPPPTPQSPMQALLPSQLQAEHTL. Positions 1449–1471 are enriched in low complexity; it reads TPSSPSAVASTVPFLTSTPVTSQ. The span at 1472-1483 shows a compositional bias: pro residues; that stretch reads PSPPQSPPPTPQ. Serine 1473 and serine 1477 each carry phosphoserine. Threonine 1481 is subject to Phosphothreonine. A Phosphoserine modification is found at serine 1484. Polar residues predominate over residues 1490 to 1500; the sequence is LPSQLQAEHTL.

In terms of assembly, interacts with RASA1. Interacts with the general transcription factor GTF2I, the interaction sequesters GTF2I in the cytoplasm. In terms of processing, phosphorylation of Tyr-1106 by PTK6 promotes the association with RASA1, inactivating RHOA while activating RAS. Phosphorylation at Tyr-308 by PDGFRA inhibits binding to GTF2I. Phosphorylated by PRKCA at Ser-1222 and Thr-1227, induces relocalization from the cytoplasm to regions of plasma membrane ruffling and prevents the binding and substrate specificity regulation by phospholipids. In brain, phosphorylated by FYN and SRC. During focal adhesion formation, phosphorylated by MAPK1 and MAPK3 at the C-terminal region, probably at Ser-1452, Ser-1477, Thr-1481 and Ser-1484. Phosphorylation by MAPK1 and MAPK3 inhibits GAP function and localizes ARGHAP35 away from newly forming focal adhesions and stress fibers in cells spreading on fibronectin. Phosphorylation at Ser-1477 and Thr-1481 by GSK3B requires priming by MAPK and inhibits RhoGAP activity and modulates polarized cell migration. Strongly expressed in retina (photoreceptor layer) and brain. Expression is maximal in the occipital, frontal, temporal lobe and also the cerebellum. Medium expression in the medulla and also in kidney, lung, liver, heart and spleen.

Its subcellular location is the cytoplasm. The protein resides in the cytoskeleton. It localises to the cilium basal body. The protein localises to the nucleus. It is found in the cell membrane. In terms of biological role, rho GTPase-activating protein (GAP). Binds several acidic phospholipids which inhibits the Rho GAP activity to promote the Rac GAP activity. This binding is inhibited by phosphorylation by PRKCA. Involved in cell differentiation as well as cell adhesion and migration, plays an important role in retinal tissue morphogenesis, neural tube fusion, midline fusion of the cerebral hemispheres and mammary gland branching morphogenesis. Transduces signals from p21-ras to the nucleus, acting via the ras GTPase-activating protein (GAP). Transduces SRC-dependent signals from cell-surface adhesion molecules, such as laminin, to promote neurite outgrowth. Regulates axon outgrowth, guidance and fasciculation. Modulates Rho GTPase-dependent F-actin polymerization, organization and assembly, is involved in polarized cell migration and in the positive regulation of ciliogenesis and cilia elongation. During mammary gland development, is required in both the epithelial and stromal compartments for ductal outgrowth. Represses transcription of the glucocorticoid receptor by binding to the cis-acting regulatory sequence 5'-GAGAAAAGAAACTGGAGAAACTC-3'; this function is however unclear and would need additional experimental evidences. The sequence is that of Rho GTPase-activating protein 35 from Canis lupus familiaris (Dog).